Consider the following 84-residue polypeptide: Cell division topological specificity factor (84 aa).

It belongs to the MinE family.

Functionally, prevents the cell division inhibition by proteins MinC and MinD at internal division sites while permitting inhibition at polar sites. This ensures cell division at the proper site by restricting the formation of a division septum at the midpoint of the long axis of the cell. The polypeptide is Cell division topological specificity factor (Pseudomonas syringae pv. tomato (strain ATCC BAA-871 / DC3000)).